The following is a 687-amino-acid chain: DNA ligase (687 aa).

Residues 34-38, 83-84, and Glu-117 each bind NAD(+); these read DAEYD and SL. The active-site N6-AMP-lysine intermediate is Lys-119. Arg-140, Glu-182, Lys-298, and Lys-322 together coordinate NAD(+). Residues Cys-416, Cys-419, Cys-434, and Cys-439 each coordinate Zn(2+). The 79-residue stretch at 609 to 687 folds into the BRCT domain; it reads EARGPFAGKT…EEEFVRLLKE (79 aa).

It belongs to the NAD-dependent DNA ligase family. LigA subfamily. The cofactor is Mg(2+). Requires Mn(2+) as cofactor.

It catalyses the reaction NAD(+) + (deoxyribonucleotide)n-3'-hydroxyl + 5'-phospho-(deoxyribonucleotide)m = (deoxyribonucleotide)n+m + AMP + beta-nicotinamide D-nucleotide.. DNA ligase that catalyzes the formation of phosphodiester linkages between 5'-phosphoryl and 3'-hydroxyl groups in double-stranded DNA using NAD as a coenzyme and as the energy source for the reaction. It is essential for DNA replication and repair of damaged DNA. The chain is DNA ligase from Anaeromyxobacter sp. (strain K).